Here is a 490-residue protein sequence, read N- to C-terminus: Glutamate--tRNA ligase (490 aa).

A 'HIGH' region motif is present at residues 9–19 (PSPTGLQHIGG). Positions 251 to 255 (KLSKR) match the 'KMSKS' region motif. ATP is bound at residue K254.

Belongs to the class-I aminoacyl-tRNA synthetase family. Glutamate--tRNA ligase type 1 subfamily. As to quaternary structure, monomer.

The protein resides in the cytoplasm. It catalyses the reaction tRNA(Glu) + L-glutamate + ATP = L-glutamyl-tRNA(Glu) + AMP + diphosphate. Its function is as follows. Catalyzes the attachment of glutamate to tRNA(Glu) in a two-step reaction: glutamate is first activated by ATP to form Glu-AMP and then transferred to the acceptor end of tRNA(Glu). The polypeptide is Glutamate--tRNA ligase (Borreliella burgdorferi (strain ATCC 35210 / DSM 4680 / CIP 102532 / B31) (Borrelia burgdorferi)).